A 235-amino-acid polypeptide reads, in one-letter code: uncharacterized protein (235 aa).

The protein to E.coli YbeR.

This is an uncharacterized protein from Escherichia coli (strain K12).